Reading from the N-terminus, the 96-residue chain is Putative translation initiation factor IF-1, chloroplastic (96 aa).

The 40-residue stretch at 18–57 folds into the S1-like domain; sequence INYVSGKIRHSFIRILPGDRVKIEVSPYDSTKGRIIYRLH.

This sequence belongs to the IF-1 family. Component of the 30S ribosomal translation pre-initiation complex which assembles on the 30S ribosome in the order IF-2 and IF-3, IF-1 and N-formylmethionyl-tRNA(fMet); mRNA recruitment can occur at any time during PIC assembly.

The protein localises to the plastid. It is found in the chloroplast. Functionally, one of the essential components for the initiation of protein synthesis. Stabilizes the binding of IF-2 and IF-3 on the 30S subunit to which N-formylmethionyl-tRNA(fMet) subsequently binds. Helps modulate mRNA selection, yielding the 30S pre-initiation complex (PIC). Upon addition of the 50S ribosomal subunit IF-1, IF-2 and IF-3 are released leaving the mature 70S translation initiation complex. In Nicotiana tabacum (Common tobacco), this protein is Putative translation initiation factor IF-1, chloroplastic (infA).